The primary structure comprises 73 residues: Neurogranin (73 aa).

The 30-residue stretch at alanine 26–threonine 55 folds into the IQ domain. Residue serine 36 is modified to Phosphoserine; by PKC. The span at lysine 47–glutamate 59 shows a compositional bias: basic and acidic residues. A disordered region spans residues lysine 47–aspartate 73.

It belongs to the neurogranin family.

Its function is as follows. Acts as a 'third messenger' substrate of protein kinase C-mediated molecular cascades during synaptic development and remodeling. Binds to calmodulin in the absence of calcium. This is Neurogranin (NRGN) from Serinus canaria (Island canary).